The following is a 137-amino-acid chain: NADPH-dependent 7-cyano-7-deazaguanine reductase (137 aa).

Residue Cys-51 is the Thioimide intermediate of the active site. Asp-58 acts as the Proton donor in catalysis. Substrate-binding positions include 73–75 (VEL) and 92–93 (HE).

Belongs to the GTP cyclohydrolase I family. QueF type 1 subfamily.

It is found in the cytoplasm. The catalysed reaction is 7-aminomethyl-7-carbaguanine + 2 NADP(+) = 7-cyano-7-deazaguanine + 2 NADPH + 3 H(+). The protein operates within tRNA modification; tRNA-queuosine biosynthesis. In terms of biological role, catalyzes the NADPH-dependent reduction of 7-cyano-7-deazaguanine (preQ0) to 7-aminomethyl-7-deazaguanine (preQ1). The protein is NADPH-dependent 7-cyano-7-deazaguanine reductase of Gloeobacter violaceus (strain ATCC 29082 / PCC 7421).